A 293-amino-acid chain; its full sequence is Elongation factor Ts (293 aa).

Positions 79–82 are involved in Mg(2+) ion dislocation from EF-Tu; sequence TDFV.

It belongs to the EF-Ts family.

It localises to the cytoplasm. In terms of biological role, associates with the EF-Tu.GDP complex and induces the exchange of GDP to GTP. It remains bound to the aminoacyl-tRNA.EF-Tu.GTP complex up to the GTP hydrolysis stage on the ribosome. The chain is Elongation factor Ts from Bacillus pumilus (strain SAFR-032).